Consider the following 551-residue polypeptide: Glucans biosynthesis protein D (551 aa).

Residues 1 to 32 (MNRRRFIKASLALAAACGTPGLATLFSRNAWA) constitute a signal peptide (tat-type signal).

Belongs to the OpgD/OpgG family. In terms of processing, predicted to be exported by the Tat system. The position of the signal peptide cleavage has not been experimentally proven.

It is found in the periplasm. Its pathway is glycan metabolism; osmoregulated periplasmic glucan (OPG) biosynthesis. In terms of biological role, probably involved in the control of the structural glucose backbone of osmoregulated periplasmic glucans (OPGs). This is Glucans biosynthesis protein D from Cronobacter sakazakii (strain ATCC BAA-894) (Enterobacter sakazakii).